The sequence spans 393 residues: Pre-mRNA-splicing regulator WTAP (393 aa).

A disordered region spans residues 240 to 393 (QQQIQTSGNR…SSVNVQGSVL (154 aa)). The segment covering 254–267 (ESKDEGETSGKDCG) has biased composition (basic and acidic residues). The segment covering 272-286 (GPSNGGSSHQRTHSS) has biased composition (polar residues). Positions 310–319 (LPNHSEERTS) are enriched in basic and acidic residues. The segment covering 320–353 (RGGSSYMNQLSTGYESVDSPTGSENSLTHQSNDT) has biased composition (polar residues). Residues 354–365 (DSNHDSQEEKPV) are compositionally biased toward basic and acidic residues. The span at 369–393 (GNRTVSSRHLQNGLDSSVNVQGSVL) shows a compositional bias: polar residues.

Belongs to the fl(2)d family. As to quaternary structure, component of the WMM complex, a N6-methyltransferase complex composed of a catalytic subcomplex, named MAC, and of an associated subcomplex, named MACOM. Component of the MACOM subcomplex.

It localises to the nucleus speckle. It is found in the nucleus. The protein localises to the nucleoplasm. Associated component of the WMM complex, a complex that mediates N6-methyladenosine (m6A) methylation of RNAs, a modification that plays a role in the efficiency of mRNA splicing and RNA processing. The protein is Pre-mRNA-splicing regulator WTAP of Xenopus tropicalis (Western clawed frog).